Consider the following 1020-residue polypeptide: Tetrathionate reductase subunit A (1020 aa).

The tat-type signal signal peptide spans 1-33 (MANLTRRQWLKVGLAVGGMVTFGLSYRDVAKRA). The 4Fe-4S Mo/W bis-MGD-type domain occupies 71 to 154 (QTIAMTQCFG…TLLESLYSPL (84 aa)). Residues C78, C81, C85, and C140 each coordinate [4Fe-4S] cluster.

This sequence belongs to the prokaryotic molybdopterin-containing oxidoreductase family. In terms of assembly, probably composed of three subunits: TtrA, TtrB and TtrC. It depends on [4Fe-4S] cluster as a cofactor. The cofactor is Mo-bis(molybdopterin guanine dinucleotide). Post-translationally, predicted to be exported by the Tat system. The position of the signal peptide cleavage has not been experimentally proven.

It is found in the periplasm. Its subcellular location is the cell inner membrane. In terms of biological role, part of a membrane-bound tetrathionate reductase that catalyzes the reduction of tetrathionate to thiosulfate. TtrA is the catalytic subunit. During mice infection, the ability to use tetrathionate as an electron acceptor is a growth advantage for S.typhimurium over the competing microbiota in the lumen of the inflamed gut. The sequence is that of Tetrathionate reductase subunit A (ttrA) from Salmonella typhimurium (strain LT2 / SGSC1412 / ATCC 700720).